The primary structure comprises 145 residues: NADH dehydrogenase [ubiquinone] 1 alpha subcomplex subunit 12 (145 aa).

At Met-1 the chain carries N-acetylmethionine.

It belongs to the complex I NDUFA12 subunit family. Complex I is composed of 45 different subunits.

The protein resides in the mitochondrion inner membrane. Its function is as follows. Accessory subunit of the mitochondrial membrane respiratory chain NADH dehydrogenase (Complex I), that is believed not to be involved in catalysis. Complex I functions in the transfer of electrons from NADH to the respiratory chain. The immediate electron acceptor for the enzyme is believed to be ubiquinone. This is NADH dehydrogenase [ubiquinone] 1 alpha subcomplex subunit 12 (NDUFA12) from Homo sapiens (Human).